We begin with the raw amino-acid sequence, 256 residues long: 3-methyl-2-oxobutanoate hydroxymethyltransferase (256 aa).

Positions 42 and 86 each coordinate Mg(2+). 3-methyl-2-oxobutanoate is bound by residues 42–43 (DS), D86, and K116. Residue E118 participates in Mg(2+) binding. E185 serves as the catalytic Proton acceptor.

Belongs to the PanB family. In terms of assembly, homodecamer; pentamer of dimers. Mg(2+) is required as a cofactor.

It localises to the cytoplasm. The catalysed reaction is 3-methyl-2-oxobutanoate + (6R)-5,10-methylene-5,6,7,8-tetrahydrofolate + H2O = 2-dehydropantoate + (6S)-5,6,7,8-tetrahydrofolate. The protein operates within cofactor biosynthesis; (R)-pantothenate biosynthesis; (R)-pantoate from 3-methyl-2-oxobutanoate: step 1/2. In terms of biological role, catalyzes the reversible reaction in which hydroxymethyl group from 5,10-methylenetetrahydrofolate is transferred onto alpha-ketoisovalerate to form ketopantoate. This is 3-methyl-2-oxobutanoate hydroxymethyltransferase from Prochlorococcus marinus (strain SARG / CCMP1375 / SS120).